Here is a 664-residue protein sequence, read N- to C-terminus: Acid beta-fructofuranosidase 4, vacuolar (664 aa).

Residues 1–43 (MASSDALLPISAREEEPLCPYTRLPMADPNQETHGPRRRRPFK) lie on the Cytoplasmic side of the membrane. A propeptide spans 1 to 108 (MASSDALLPI…WKLSGDRNTP (108 aa)) (removed in mature form). 2 short sequence motifs (critical for endoplasmic reticulum export) span residues 7–8 (LL) and 9–10 (PI). The Critical for trafficking from the trans-Golgi network to the prevacuolar compartment and from the prevacuolar compartment to the central vacuole motif lies at 14–16 (EEE). The helical; Signal-anchor for type II membrane protein transmembrane segment at 44–64 (GLLAVSFGLLFIAFYVALIAT) threads the bilayer. The Lumenal portion of the chain corresponds to 65–664 (HDGSRSNDEG…DEAVRALSRT (600 aa)). An N-linked (GlcNAc...) asparagine glycan is attached at Asn113. Residues 132-135 (WMND), Gln151, Trp159, 194-195 (WT), and 258-259 (RD) each bind substrate. Asp135 is a catalytic residue. Asn280 carries an N-linked (GlcNAc...) (complex) asparagine glycan. Substrate-binding residues include Glu313 and Asp346. N-linked (GlcNAc...) asparagine glycosylation is found at Asn362 and Asn498. A disulfide bridge links Cys510 with Cys558.

The protein belongs to the glycosyl hydrolase 32 family. As to quaternary structure, may be present in two forms, a 70 kDa monomer and a heterodimer of the 30 kDa and 38 kDa subunits. The ratio of the levels of the two forms within cells appears to be regulated developmentally. As to expression, mostly expressed in stems, roots and flowers, and, to a lower extent, in mature leaves.

It localises to the vacuole. It is found in the endoplasmic reticulum membrane. The protein localises to the golgi apparatus membrane. Its subcellular location is the golgi apparatus. The protein resides in the trans-Golgi network membrane. It localises to the prevacuolar compartment membrane. It is found in the vacuole membrane. The protein localises to the vacuole lumen. It carries out the reaction Hydrolysis of terminal non-reducing beta-D-fructofuranoside residues in beta-D-fructofuranosides.. It participates in glycan biosynthesis; sucrose metabolism. Its activity is regulated as follows. Inhibited by C/VIF1 and C/VIF2. In terms of biological role, possible role in the continued mobilization of sucrose to sink organs. Regulates root elongation. The chain is Acid beta-fructofuranosidase 4, vacuolar from Arabidopsis thaliana (Mouse-ear cress).